The sequence spans 428 residues: Enolase (428 aa).

Residue Q165 participates in (2R)-2-phosphoglycerate binding. Catalysis depends on E207, which acts as the Proton donor. The Mg(2+) site is built by D244, E285, and D312. K337, R366, S367, and K388 together coordinate (2R)-2-phosphoglycerate. The active-site Proton acceptor is the K337.

The protein belongs to the enolase family. As to quaternary structure, component of the RNA degradosome, a multiprotein complex involved in RNA processing and mRNA degradation. It depends on Mg(2+) as a cofactor.

It localises to the cytoplasm. It is found in the secreted. The protein resides in the cell surface. It carries out the reaction (2R)-2-phosphoglycerate = phosphoenolpyruvate + H2O. The protein operates within carbohydrate degradation; glycolysis; pyruvate from D-glyceraldehyde 3-phosphate: step 4/5. Its function is as follows. Catalyzes the reversible conversion of 2-phosphoglycerate (2-PG) into phosphoenolpyruvate (PEP). It is essential for the degradation of carbohydrates via glycolysis. The chain is Enolase from Coxiella burnetii (strain Dugway 5J108-111).